A 257-amino-acid chain; its full sequence is Undecaprenyl-diphosphatase (257 aa).

7 helical membrane passes run 42–62 (YVLFNLICHLGTLGSILYMFL), 76–96 (IFHIILGTLPLFPLVLILKPI), 103–123 (PQYLGLCFLFSAALLFSGVYF), 136–156 (CLTIGLFQAVAVLPGISRSGA), 172–192 (IQFSFLLAIPAILGGTFLEIW), 209–229 (QFLTGFITSFMIGCASLWAVI), and 237–257 (WVYFAWYCLFIGIATTLYFQM).

This sequence belongs to the UppP family.

It is found in the cell inner membrane. The enzyme catalyses di-trans,octa-cis-undecaprenyl diphosphate + H2O = di-trans,octa-cis-undecaprenyl phosphate + phosphate + H(+). Catalyzes the dephosphorylation of undecaprenyl diphosphate (UPP). Confers resistance to bacitracin. This Protochlamydia amoebophila (strain UWE25) protein is Undecaprenyl-diphosphatase.